The following is a 585-amino-acid chain: Lipoprotein LpqB (585 aa).

The signal sequence occupies residues 1–18 (MKRLLTVLVVGLVALVSG). Cys-19 carries the N-palmitoyl cysteine lipid modification. The S-diacylglycerol cysteine moiety is linked to residue Cys-19. A disordered region spans residues 24 to 46 (SSSSPQAIGTVERPAPPSLPKPT). Pro residues predominate over residues 37–46 (PAPPSLPKPT).

The protein belongs to the LpqB lipoprotein family. As to quaternary structure, interacts with MtrB, probably extracytoplasmically via its sensor domain.

The protein localises to the cell membrane. Its subcellular location is the secreted. It localises to the cell wall. Functionally, may modulate activity of the MtrAB system in controlling homeostasis of the cell wall and cell division. The chain is Lipoprotein LpqB from Mycolicibacterium smegmatis (strain ATCC 700084 / mc(2)155) (Mycobacterium smegmatis).